Consider the following 465-residue polypeptide: Cysteine--tRNA ligase (465 aa).

Cys30 contributes to the Zn(2+) binding site. The short motif at 32–42 (ITVYDYCHVGH) is the 'HIGH' region element. Cys214, His239, and Glu243 together coordinate Zn(2+). A 'KMSKS' region motif is present at residues 271–275 (KMSKS). Residue Lys274 participates in ATP binding.

This sequence belongs to the class-I aminoacyl-tRNA synthetase family. In terms of assembly, monomer. Zn(2+) serves as cofactor.

It localises to the cytoplasm. The enzyme catalyses tRNA(Cys) + L-cysteine + ATP = L-cysteinyl-tRNA(Cys) + AMP + diphosphate. This chain is Cysteine--tRNA ligase, found in Burkholderia ambifaria (strain ATCC BAA-244 / DSM 16087 / CCUG 44356 / LMG 19182 / AMMD) (Burkholderia cepacia (strain AMMD)).